The following is a 90-amino-acid chain: Putative regulatory protein NT01CX_2250 (90 aa).

It belongs to the RemA family.

The protein is Putative regulatory protein NT01CX_2250 of Clostridium novyi (strain NT).